Consider the following 35-residue polypeptide: Cecropin-B (35 aa).

The residue at position 35 (L35) is a Leucine amide.

The protein belongs to the cecropin family.

It localises to the secreted. Cecropins have lytic and antibacterial activity against several Gram-positive and Gram-negative bacteria. The polypeptide is Cecropin-B (Antheraea pernyi (Chinese oak silk moth)).